Reading from the N-terminus, the 428-residue chain is Light-independent protochlorophyllide reductase subunit N (428 aa).

C31, C56, and C117 together coordinate [4Fe-4S] cluster.

Belongs to the BchN/ChlN family. In terms of assembly, protochlorophyllide reductase is composed of three subunits; BchL, BchN and BchB. Forms a heterotetramer of two BchB and two BchN subunits. [4Fe-4S] cluster serves as cofactor.

The catalysed reaction is chlorophyllide a + oxidized 2[4Fe-4S]-[ferredoxin] + 2 ADP + 2 phosphate = protochlorophyllide a + reduced 2[4Fe-4S]-[ferredoxin] + 2 ATP + 2 H2O. It functions in the pathway porphyrin-containing compound metabolism; bacteriochlorophyll biosynthesis (light-independent). Functionally, component of the dark-operative protochlorophyllide reductase (DPOR) that uses Mg-ATP and reduced ferredoxin to reduce ring D of protochlorophyllide (Pchlide) to form chlorophyllide a (Chlide). This reaction is light-independent. The NB-protein (BchN-BchB) is the catalytic component of the complex. This Rhodopseudomonas palustris (strain BisB5) protein is Light-independent protochlorophyllide reductase subunit N.